Consider the following 231-residue polypeptide: 7-cyano-7-deazaguanine synthase (231 aa).

Position 8–18 (8–18 (FSGGQDSTTCL)) interacts with ATP. Zn(2+)-binding residues include cysteine 188, cysteine 197, cysteine 200, and cysteine 203.

Belongs to the QueC family. Zn(2+) serves as cofactor.

The enzyme catalyses 7-carboxy-7-deazaguanine + NH4(+) + ATP = 7-cyano-7-deazaguanine + ADP + phosphate + H2O + H(+). It participates in purine metabolism; 7-cyano-7-deazaguanine biosynthesis. Catalyzes the ATP-dependent conversion of 7-carboxy-7-deazaguanine (CDG) to 7-cyano-7-deazaguanine (preQ(0)). In Escherichia coli (strain ATCC 8739 / DSM 1576 / NBRC 3972 / NCIMB 8545 / WDCM 00012 / Crooks), this protein is 7-cyano-7-deazaguanine synthase.